The following is a 198-amino-acid chain: Large ribosomal subunit protein eL18 (198 aa).

A disordered region spans residues 157–198 (RHFGASGVPGSHSKPYATNRGKETKRGRRTGRSYKRKAFRHV). Residues 179–198 (ETKRGRRTGRSYKRKAFRHV) are compositionally biased toward basic residues.

Belongs to the eukaryotic ribosomal protein eL18 family.

It is found in the cytoplasm. This chain is Large ribosomal subunit protein eL18 (RPL18-A), found in Leishmania major.